The chain runs to 240 residues: tRNA (guanine-N(1)-)-methyltransferase (240 aa).

Residues Gly112 and 132–137 (LGDFVL) contribute to the S-adenosyl-L-methionine site.

This sequence belongs to the RNA methyltransferase TrmD family. Homodimer.

It is found in the cytoplasm. It catalyses the reaction guanosine(37) in tRNA + S-adenosyl-L-methionine = N(1)-methylguanosine(37) in tRNA + S-adenosyl-L-homocysteine + H(+). Specifically methylates guanosine-37 in various tRNAs. This is tRNA (guanine-N(1)-)-methyltransferase from Cyanothece sp. (strain PCC 7425 / ATCC 29141).